A 435-amino-acid polypeptide reads, in one-letter code: MKQDMIVILDLGSHENTVLARAIRALGVYSEIYPHDITVEELKALPNVKGIIINGGLNNVIDGVAIDVNPSIYTMGIPVMAAGHDKATCAVKLPAFTDDIEAIKAAIKSFVFDTCQAEANWNMANFVNDQIELIRRQVGDKKVLLALSGGVDSSVVAALLLKAIGENLVCVHVNHGLMRKGESEDVVEVFSNQLKANLVYVDVTDRFLDKLAGVEDPEQKRKIIGGEFIRVFEEEARKLDGIDFLGQGTIYPDIVESGTKTAKMVKSHHNVGGLPEDLKFQLVEPLRQLFKDEVRACGLELGLPYEMVYRQPFPGPGLGVRCLGAITRDRLEAVRESDAILREEFQIAGLDKKVWQYFTVVPDFKSVGVRDNARSFDWPVIIRAVNTVDAMTATIEPVDWPILMKITDRILKEVKNVNRVCYDMSPKPNATIEWE.

The Glutamine amidotransferase type-1; truncated domain occupies M1–N120. In terms of domain architecture, GMPS ATP-PPase spans W121–R310. S148–S154 serves as a coordination point for ATP.

Homodimer.

It catalyses the reaction XMP + L-glutamine + ATP + H2O = GMP + L-glutamate + AMP + diphosphate + 2 H(+). It functions in the pathway purine metabolism; GMP biosynthesis; GMP from XMP (L-Gln route): step 1/1. Its function is as follows. Catalyzes the synthesis of GMP from XMP. This is Putative GMP synthase [glutamine-hydrolyzing] 2 (guaA2) from Bacteroides thetaiotaomicron (strain ATCC 29148 / DSM 2079 / JCM 5827 / CCUG 10774 / NCTC 10582 / VPI-5482 / E50).